Consider the following 265-residue polypeptide: Small ribosomal subunit protein uS2 (265 aa).

Belongs to the universal ribosomal protein uS2 family.

This Microcystis aeruginosa (strain NIES-843 / IAM M-2473) protein is Small ribosomal subunit protein uS2.